Here is a 100-residue protein sequence, read N- to C-terminus: Large ribosomal subunit protein bL21 (100 aa).

Belongs to the bacterial ribosomal protein bL21 family. Part of the 50S ribosomal subunit. Contacts protein L20.

Functionally, this protein binds to 23S rRNA in the presence of protein L20. In Deinococcus deserti (strain DSM 17065 / CIP 109153 / LMG 22923 / VCD115), this protein is Large ribosomal subunit protein bL21.